We begin with the raw amino-acid sequence, 505 residues long: GDP-Man:Man(3)GlcNAc(2)-PP-Dol alpha-1,2-mannosyltransferase (505 aa).

Over 1-3 (MDE) the chain is Lumenal. The chain crosses the membrane as a helical span at residues 4–24 (LIMMVFVLFTIVLLLTVSMTL). Over 25–145 (AALISTIVVL…KWVEASTYPR (121 aa)) the chain is Cytoplasmic. An intramembrane region (helical) is located at residues 146–166 (FTLIGQSLGSMILGWEALTKF). The Cytoplasmic segment spans residues 167 to 402 (VPTIFLDSMG…VGIHTMYNEH (236 aa)). Positions 403–423 (FGIGVVELMAAGVIPVANNSA) form an intramembrane region, helical. Residues 424-505 (GPKEDIVRHE…NNNSSSKKRN (82 aa)) are Cytoplasmic-facing.

This sequence belongs to the glycosyltransferase group 1 family.

The protein localises to the endoplasmic reticulum membrane. It carries out the reaction an alpha-D-Man-(1-&gt;3)-[alpha-D-Man-(1-&gt;6)]-beta-D-Man-(1-&gt;4)-beta-D-GlcNAc-(1-&gt;4)-alpha-D-GlcNAc-diphospho-di-trans,poly-cis-dolichol + 2 GDP-alpha-D-mannose = an alpha-D-Man-(1-&gt;2)-alpha-D-Man-(1-&gt;2)-alpha-D-Man-(1-&gt;3)-[alpha-D-Man-(1-&gt;6)]-beta-D-Man-(1-&gt;4)-beta-D-GlcNAc-(1-&gt;4)-alpha-D-GlcNAc-diphospho-di-trans,poly-cis-dolichol + 2 GDP + 2 H(+). Its pathway is protein modification; protein glycosylation. GDP-Man:Man(3)GlcNAc(2)-PP-Dol alpha-1,2-mannosyltransferase that operates in the biosynthetic pathway of dolichol-linked oligosaccharides, the glycan precursors employed in protein asparagine (N)-glycosylation. The assembly of dolichol-linked oligosaccharides begins on the cytosolic side of the endoplasmic reticulum membrane and finishes in its lumen. The sequential addition of sugars to dolichol pyrophosphate produces dolichol-linked oligosaccharides containing fourteen sugars, including two GlcNAcs, nine mannoses and three glucoses. Once assembled, the oligosaccharide is transferred from the lipid to nascent proteins by oligosaccharyltransferases. Catalyzes, on the cytoplasmic face of the endoplasmic reticulum, the addition of the fourth and fifth mannose residues to the dolichol-linked oligosaccharide chain, to produce Man(5)GlcNAc(2)-PP-dolichol core oligosaccharide. The sequence is that of GDP-Man:Man(3)GlcNAc(2)-PP-Dol alpha-1,2-mannosyltransferase (alg11) from Dictyostelium discoideum (Social amoeba).